Reading from the N-terminus, the 58-residue chain is UPF0337 protein SAV_738 (58 aa).

The segment at 1–58 (MAADEKAQANGEQAKGKVKKVVGGAAGNESLKGKGHAEESKGDLRAAKEKAKDAIKRK) is disordered. Positions 31 to 58 (LKGKGHAEESKGDLRAAKEKAKDAIKRK) are enriched in basic and acidic residues.

The protein belongs to the UPF0337 (CsbD) family.

This Streptomyces avermitilis (strain ATCC 31267 / DSM 46492 / JCM 5070 / NBRC 14893 / NCIMB 12804 / NRRL 8165 / MA-4680) protein is UPF0337 protein SAV_738.